A 317-amino-acid chain; its full sequence is Transcription factor EC (317 aa).

The interval 1 to 44 (MTLDHQILNQSFKRSHPPTPSSELLVQHGHPSPESDTGLTGNPL) is disordered. Residues 1 to 90 (MTLDHQILNQ…GLTSASCPSS (90 aa)) are necessary for transcriptional transactivation. A compositionally biased stretch (polar residues) spans 34-43 (ESDTGLTGNP). Positions 110–163 (QKKDNHNLIERRRRYNINYRIKELGTLIPKSNDPDMRWNKGTILKASVEYIKWL) constitute a bHLH domain. The necessary for transcriptional transactivation stretch occupies residues 241–317 (TSPELCDQAM…SFSSEDGDEL (77 aa)). The interval 297–317 (PAVSKESSRRSSFSSEDGDEL) is disordered.

Belongs to the MiT/TFE family. As to quaternary structure, homodimer. Forms heterodimers with MITF and TFE3. Interacts with MITF.

The protein localises to the nucleus. Its function is as follows. Transcriptional regulator that acts as a repressor or an activator. Acts as a transcriptional repressor on minimal promoter containing element F (that includes an E-box sequence). Binds to element F in an E-box sequence-specific manner. Acts as a transcriptional transactivator on the proximal promoter region of the tartrate-resistant acid phosphatase (TRAP) E-box containing promoter. Collaborates with MITF in target gene activation. Acts as a transcriptional repressor on minimal promoter containing mu E3 enhancer sequence. Binds to mu E3 DNA sequence of the immunoglobulin heavy-chain gene enhancer. Binds DNA in a homo- or heterodimeric form. In Bos taurus (Bovine), this protein is Transcription factor EC (TFEC).